The primary structure comprises 225 residues: Cytidylate kinase (225 aa).

12–20 (GPSGAGKGT) lines the ATP pocket.

Belongs to the cytidylate kinase family. Type 1 subfamily.

Its subcellular location is the cytoplasm. The catalysed reaction is CMP + ATP = CDP + ADP. The enzyme catalyses dCMP + ATP = dCDP + ADP. The chain is Cytidylate kinase from Edwardsiella ictaluri (strain 93-146).